A 357-amino-acid chain; its full sequence is Protein-L-isoaspartate O-methyltransferase domain-containing protein 1 (357 aa).

A lipid anchor (N-myristoyl glycine) is attached at Gly-2. Ser-64 is a catalytic residue. AdoMet binding motif regions lie at residues 85-94, 160-164, and 181-191; these read LNLGSGTGYL, YDRIY, and LKVGGILVMPI. The BC-box stretch occupies residues 240-250; sequence VRNLQDLARIY. The segment at 299-333 is disordered; the sequence is PLDSEEDEKMEEDNKEEEEKDHNEAMKPEEPPQNL. Positions 301 to 317 are enriched in acidic residues; sequence DSEEDEKMEEDNKEEEE. Basic and acidic residues predominate over residues 318-333; the sequence is KDHNEAMKPEEPPQNL. The segment at 341-344 is CUL-box; it reads LPLP.

It belongs to the methyltransferase superfamily. L-isoaspartyl/D-aspartyl protein methyltransferase family. In terms of assembly, component of the probable ECS(PCMTD1) E3 ubiquitin-protein ligase complex, at least composed of CUL5, ELOB, ELOC, RBX2 and PCMTD1. Interacts (via the BC-box) with ELOB and ELOC; the interaction is direct and stabilizes PCMTD1.

Its subcellular location is the cytoplasm. The protein resides in the membrane. Substrate recognition component of an ECS (Elongin BC-CUL5-SOCS-box protein) E3 ubiquitin ligase complex which mediates the ubiquitination and subsequent proteasomal degradation of target proteins. Specifically binds to the methyltransferase cofactor S-adenosylmethionine (AdoMet) via the N-terminal AdoMet binding motif, but does not display methyltransferase activity. May provide an alternate maintenance pathway for modified proteins by acting as a damage-specific E3 ubiquitin ligase adaptor protein. The chain is Protein-L-isoaspartate O-methyltransferase domain-containing protein 1 from Homo sapiens (Human).